The chain runs to 410 residues: MQIYKVGGAVRDRLLGRPVTDIDWVVVGASSDEMLARGYRPVGADFPVFLHPQSGEEYALARTERKSGRGYGGFTFHASPEVTLEEDLTRRDLTINAMAEDEQGRVIDPYGGQADLEARLLRHVSPAFAEDPLRVLRVARFAARYAGLGFRVAAETLALMRQLAESGELQALTPERSWKEISRALMEPNPEVFIQVLHDCGALAELIPEVEALFGVPQPAAHHPEIDTGVHVLSVLQQCARHRQPLSVRWACLLHDLGKGLTSEADWPRHIAHETRGVPLIDAVNQRFRVPRDCQELARLVGEYHTHAHRALELRPNTLLELLQSFDVYRRPQRFEEFVAASEMDARGRLGLEQRDYPQAAYLLGAAQAARAVSVKPLVEKGLKGAELGEALKCARLAALKAYKEERGKA.

The ATP site is built by G8 and R11. Residues G8 and R11 each coordinate CTP. Mg(2+) contacts are provided by D21 and D23. Residues R91, R137, and R140 each contribute to the ATP site. Positions 91, 137, and 140 each coordinate CTP. Residues T228–Y329 enclose the HD domain.

The protein belongs to the tRNA nucleotidyltransferase/poly(A) polymerase family. Bacterial CCA-adding enzyme type 1 subfamily. In terms of assembly, monomer. Can also form homodimers and oligomers. Mg(2+) is required as a cofactor. The cofactor is Ni(2+).

The catalysed reaction is a tRNA precursor + 2 CTP + ATP = a tRNA with a 3' CCA end + 3 diphosphate. The enzyme catalyses a tRNA with a 3' CCA end + 2 CTP + ATP = a tRNA with a 3' CCACCA end + 3 diphosphate. Functionally, catalyzes the addition and repair of the essential 3'-terminal CCA sequence in tRNAs without using a nucleic acid template. Adds these three nucleotides in the order of C, C, and A to the tRNA nucleotide-73, using CTP and ATP as substrates and producing inorganic pyrophosphate. tRNA 3'-terminal CCA addition is required both for tRNA processing and repair. Also involved in tRNA surveillance by mediating tandem CCA addition to generate a CCACCA at the 3' terminus of unstable tRNAs. While stable tRNAs receive only 3'-terminal CCA, unstable tRNAs are marked with CCACCA and rapidly degraded. This Pseudomonas aeruginosa (strain LESB58) protein is Multifunctional CCA protein.